A 213-amino-acid chain; its full sequence is Peptidyl-prolyl cis-trans isomerase B (213 aa).

The signal sequence occupies residues M1–S23. Positions F35 to H197 constitute a PPIase cyclophilin-type domain. Positions D210–E213 match the Prevents secretion from ER motif.

It belongs to the cyclophilin-type PPIase family. PPIase B subfamily.

The protein resides in the endoplasmic reticulum lumen. It catalyses the reaction [protein]-peptidylproline (omega=180) = [protein]-peptidylproline (omega=0). With respect to regulation, inhibited by cyclosporin A (CsA). Functionally, PPIases accelerate the folding of proteins. It catalyzes the cis-trans isomerization of proline imidic peptide bonds in oligopeptides. The polypeptide is Peptidyl-prolyl cis-trans isomerase B (Schistosoma japonicum (Blood fluke)).